Reading from the N-terminus, the 339-residue chain is Deubiquitinase and deneddylase Dub2 (339 aa).

The helical transmembrane segment at 36–56 (IIIALFLIVISCGLILCAYTF) threads the bilayer. Active-site residues include H203, D220, and C282.

The protein belongs to the peptidase C48 family.

The protein localises to the secreted. Its subcellular location is the host cell. It localises to the membrane. Effector proteins function to alter host cell physiology and promote bacterial survival in host tissues. This protease possesses deubiquitinating and deneddylating activities. The chain is Deubiquitinase and deneddylase Dub2 (cdu2) from Chlamydia trachomatis serovar B (strain Jali20/OT).